A 240-amino-acid chain; its full sequence is Late expression factor 5 homolog (240 aa).

It belongs to the baculoviridae LEF-5 family.

In terms of biological role, required for late and very late gene expression. This is Late expression factor 5 homolog from Tortricidae (ClGV).